The chain runs to 61 residues: Bacteriocin sakacin-P (61 aa).

A propeptide spanning residues 1–18 (MEKFIELSLKEVTAITGG) is cleaved from the precursor. A disulfide bond links cysteine 27 and cysteine 32.

The protein belongs to the bacteriocin class IIA/YGNGV family.

Its subcellular location is the secreted. In terms of biological role, bactericidal activity; inhibits closely related Lactobacilli, Listeria monocytogenes and ivanovvi, Enterococcus faecalis, Carnobacterium sp and Brocothrix thermosphacta. This Latilactobacillus sakei (Lactobacillus sakei) protein is Bacteriocin sakacin-P (sakP).